A 240-amino-acid polypeptide reads, in one-letter code: Adenylate dimethylallyltransferase (240 aa).

It belongs to the isopentenyl transferase family.

The enzyme catalyses dimethylallyl diphosphate + AMP = N(6)-(dimethylallyl)adenosine 5'-phosphate + diphosphate. Transfers dimethylallyl groups to AMP as part of the biosynthesis of cytokinin phytohormones. The protein is Adenylate dimethylallyltransferase (izt) of Agrobacterium tumefaciens (strain Ach5).